The primary structure comprises 412 residues: uncharacterized protein (412 aa).

The first 21 residues, 1 to 21 (MIIPMLRILLIVLFVLNLVTS), serve as a signal peptide directing secretion. Disordered stretches follow at residues 85–134 (QPPA…STTT), 250–294 (STTE…TPGT), and 327–357 (VELG…HVRE). Residues 88-105 (ASLTSLPAAPPSAQVAPP) are compositionally biased toward low complexity. Residues 124-134 (TPQASISSTTT) show a composition bias toward polar residues. Composition is skewed to low complexity over residues 250-259 (STTENTTEQS) and 266-293 (TTST…GTPG). Over residues 330–347 (GEGDDDEENDDDSSEEEE) the composition is skewed to acidic residues. The segment covering 348–357 (TKPPARHVRE) has biased composition (basic and acidic residues). A ShKT domain is found at 371–408 (CDEEEDDKGKICKLWAAGGLCGTHKPTMFLFCRKTCLC).

This is an uncharacterized protein from Caenorhabditis elegans.